The sequence spans 465 residues: Cysteine--tRNA ligase (465 aa).

Residue Cys27 participates in Zn(2+) binding. The short motif at 29-39 is the 'HIGH' region element; that stretch reads PTVYDDAHLGH. The Zn(2+) site is built by Cys207, His237, and Glu241. Residues 269–273 carry the 'KMSKS' region motif; sequence KMSKS. An ATP-binding site is contributed by Lys272.

The protein belongs to the class-I aminoacyl-tRNA synthetase family. As to quaternary structure, monomer. Requires Zn(2+) as cofactor.

Its subcellular location is the cytoplasm. The catalysed reaction is tRNA(Cys) + L-cysteine + ATP = L-cysteinyl-tRNA(Cys) + AMP + diphosphate. The protein is Cysteine--tRNA ligase of Helicobacter acinonychis (strain Sheeba).